The sequence spans 130 residues: Small ribosomal subunit protein uS11 (130 aa).

The protein belongs to the universal ribosomal protein uS11 family. In terms of assembly, part of the 30S ribosomal subunit. Interacts with proteins S7 and S18. Binds to IF-3.

In terms of biological role, located on the platform of the 30S subunit, it bridges several disparate RNA helices of the 16S rRNA. Forms part of the Shine-Dalgarno cleft in the 70S ribosome. The polypeptide is Small ribosomal subunit protein uS11 (Prochlorococcus marinus (strain MIT 9303)).